A 371-amino-acid chain; its full sequence is Aspartate-semialdehyde dehydrogenase (371 aa).

NADP(+) contacts are provided by residues 11-14 (RGMV), 38-39 (TS), and glutamine 75. Residue arginine 104 coordinates phosphate. Residue cysteine 137 is the Acyl-thioester intermediate of the active site. Glutamine 164 serves as a coordination point for substrate. 167–168 (SG) lines the NADP(+) pocket. Position 243 (glutamate 243) interacts with substrate. Lysine 246 is a binding site for phosphate. Arginine 269 contacts substrate. The active-site Proton acceptor is the histidine 276. Glutamine 352 serves as a coordination point for NADP(+).

Belongs to the aspartate-semialdehyde dehydrogenase family. In terms of assembly, homodimer.

It catalyses the reaction L-aspartate 4-semialdehyde + phosphate + NADP(+) = 4-phospho-L-aspartate + NADPH + H(+). It functions in the pathway amino-acid biosynthesis; L-lysine biosynthesis via DAP pathway; (S)-tetrahydrodipicolinate from L-aspartate: step 2/4. It participates in amino-acid biosynthesis; L-methionine biosynthesis via de novo pathway; L-homoserine from L-aspartate: step 2/3. Its pathway is amino-acid biosynthesis; L-threonine biosynthesis; L-threonine from L-aspartate: step 2/5. Its function is as follows. Catalyzes the NADPH-dependent formation of L-aspartate-semialdehyde (L-ASA) by the reductive dephosphorylation of L-aspartyl-4-phosphate. In Buchnera aphidicola subsp. Acyrthosiphon pisum (strain APS) (Acyrthosiphon pisum symbiotic bacterium), this protein is Aspartate-semialdehyde dehydrogenase.